Reading from the N-terminus, the 65-residue chain is Photosystem II reaction center protein J (65 aa).

A helical membrane pass occupies residues 35–55 (LWLVATAGGTAVIFVLGIFFY).

This sequence belongs to the PsbJ family. In terms of assembly, PSII is composed of 1 copy each of membrane proteins PsbA, PsbB, PsbC, PsbD, PsbE, PsbF, PsbH, PsbI, PsbJ, PsbK, PsbL, PsbM, PsbT, PsbX, PsbY, Psb30/Ycf12, peripheral proteins PsbO, CyanoQ (PsbQ), PsbU, PsbV and a large number of cofactors. It forms dimeric complexes.

The protein resides in the cellular thylakoid membrane. Functionally, one of the components of the core complex of photosystem II (PSII). PSII is a light-driven water:plastoquinone oxidoreductase that uses light energy to abstract electrons from H(2)O, generating O(2) and a proton gradient subsequently used for ATP formation. It consists of a core antenna complex that captures photons, and an electron transfer chain that converts photonic excitation into a charge separation. The polypeptide is Photosystem II reaction center protein J (Prochlorococcus marinus (strain NATL1A)).